We begin with the raw amino-acid sequence, 117 residues long: Large ribosomal subunit protein bL20c (117 aa).

It belongs to the bacterial ribosomal protein bL20 family.

It localises to the plastid. The protein resides in the chloroplast. Binds directly to 23S ribosomal RNA and is necessary for the in vitro assembly process of the 50S ribosomal subunit. It is not involved in the protein synthesizing functions of that subunit. The polypeptide is Large ribosomal subunit protein bL20c (Nasturtium officinale (Watercress)).